The chain runs to 1641 residues: Maestro heat-like repeat-containing protein family member 1 (1641 aa).

HEAT repeat units lie at residues 3–41, 159–198, 344–382, 385–423, 1048–1086, 1358–1396, and 1605–1641; these read ESSM…ARPV, VPFL…GALE, CSSP…SAAA, EDKK…HGYL, PDQL…ERGG, LMLL…GCPD, and QVDL…VKLA.

This sequence belongs to the MROH1 family. As to quaternary structure, homooligomer; homooligomerizes at lysosome scission sites.

The protein resides in the lysosome membrane. In terms of biological role, lysosome fission factor. Recruited to lysosomes by RAB7 (RAB7A or RAB7B) at scission sites and homooligomerizes to mediate the constriction and scission of lysosomal tubules. May sever membranes by inserting amphipathic helices into one bilayer leaflet. Lysosome fission is required to maintain their steady-state number, shape, size, composition and function, and to accomplish regeneration. In Homo sapiens (Human), this protein is Maestro heat-like repeat-containing protein family member 1.